The chain runs to 75 residues: Sec-independent protein translocase protein TatA (75 aa).

A helical membrane pass occupies residues 1-21 (MFGLSPAQLIILLVVILLIFG).

This sequence belongs to the TatA/E family. The Tat system comprises two distinct complexes: a TatABC complex, containing multiple copies of TatA, TatB and TatC subunits, and a separate TatA complex, containing only TatA subunits. Substrates initially bind to the TatABC complex, which probably triggers association of the separate TatA complex to form the active translocon.

It localises to the cell inner membrane. In terms of biological role, part of the twin-arginine translocation (Tat) system that transports large folded proteins containing a characteristic twin-arginine motif in their signal peptide across membranes. TatA could form the protein-conducting channel of the Tat system. This chain is Sec-independent protein translocase protein TatA, found in Haemophilus influenzae (strain PittEE).